The primary structure comprises 528 residues: Probable feruloyl esterase B-1 (528 aa).

A signal peptide spans methionine 1–serine 19. Disulfide bonds link cysteine 29-cysteine 78, cysteine 64-cysteine 117, cysteine 190-cysteine 445, cysteine 259-cysteine 276, cysteine 285-cysteine 295, and cysteine 505-cysteine 527. N-linked (GlcNAc...) asparagine glycosylation is found at asparagine 83 and asparagine 101. The Acyl-ester intermediate role is filled by serine 191. 5 residues coordinate Ca(2+): aspartate 260, aspartate 263, alanine 265, aspartate 267, and isoleucine 269. N-linked (GlcNAc...) asparagine glycans are attached at residues asparagine 286, asparagine 354, and asparagine 385. Catalysis depends on charge relay system residues aspartate 404 and histidine 444.

It belongs to the tannase family.

The protein resides in the secreted. The enzyme catalyses feruloyl-polysaccharide + H2O = ferulate + polysaccharide.. Its function is as follows. Involved in degradation of plant cell walls. Hydrolyzes the feruloyl-arabinose ester bond in arabinoxylans as well as the feruloyl-galactose and feruloyl-arabinose ester bonds in pectin. The protein is Probable feruloyl esterase B-1 (faeB-1) of Aspergillus fumigatus (strain CBS 144.89 / FGSC A1163 / CEA10) (Neosartorya fumigata).